A 436-amino-acid chain; its full sequence is 3-oxo-tetronate kinase (436 aa).

Residues Ser-272, 372 to 375, and Gly-415 contribute to the ATP site; that span reads GGET.

Belongs to the four-carbon acid sugar kinase family.

It carries out the reaction 3-dehydro-L-erythronate + ATP = 3-dehydro-4-O-phospho-L-erythronate + ADP + H(+). It catalyses the reaction 3-dehydro-D-erythronate + ATP = 3-dehydro-4-O-phospho-D-erythronate + ADP + H(+). Catalyzes the ATP-dependent phosphorylation of 3-oxo-tetronate to 3-oxo-tetronate 4-phosphate. The sequence is that of 3-oxo-tetronate kinase from Brucella melitensis biotype 1 (strain ATCC 23456 / CCUG 17765 / NCTC 10094 / 16M).